The sequence spans 571 residues: Phosphoenolpyruvate-protein phosphotransferase (571 aa).

H189 functions as the Tele-phosphohistidine intermediate in the catalytic mechanism. Residues R296 and R332 each contribute to the phosphoenolpyruvate site. Mg(2+)-binding residues include E431 and D455. Residues 454–455 and R465 contribute to the phosphoenolpyruvate site; that span reads ND. C502 functions as the Proton donor in the catalytic mechanism.

Belongs to the PEP-utilizing enzyme family. As to quaternary structure, homodimer. Mg(2+) serves as cofactor.

It localises to the cytoplasm. The catalysed reaction is L-histidyl-[protein] + phosphoenolpyruvate = N(pros)-phospho-L-histidyl-[protein] + pyruvate. General (non sugar-specific) component of the phosphoenolpyruvate-dependent sugar phosphotransferase system (sugar PTS). This major carbohydrate active-transport system catalyzes the phosphorylation of incoming sugar substrates concomitantly with their translocation across the cell membrane. Enzyme I transfers the phosphoryl group from phosphoenolpyruvate (PEP) to the phosphoryl carrier protein (HPr). This chain is Phosphoenolpyruvate-protein phosphotransferase (ptsI), found in Buchnera aphidicola subsp. Acyrthosiphon pisum (strain APS) (Acyrthosiphon pisum symbiotic bacterium).